Reading from the N-terminus, the 342-residue chain is GTPase Obg (342 aa).

Positions 1 to 159 constitute an Obg domain; sequence MQFIDRAEIE…RNLRLELKLL (159 aa). Residues 160 to 328 enclose the OBG-type G domain; sequence AEVGIIGLPN…LLQAIWHRLD (169 aa). GTP is bound by residues 166–173, 191–195, 213–216, 280–283, and 309–311; these read GLPNAGKS, FTTLV, DIPG, NKVD, and SAV. S173 and T193 together coordinate Mg(2+).

It belongs to the TRAFAC class OBG-HflX-like GTPase superfamily. OBG GTPase family. In terms of assembly, monomer. Mg(2+) is required as a cofactor.

The protein resides in the cytoplasm. Functionally, an essential GTPase which binds GTP, GDP and possibly (p)ppGpp with moderate affinity, with high nucleotide exchange rates and a fairly low GTP hydrolysis rate. Plays a role in control of the cell cycle, stress response, ribosome biogenesis and in those bacteria that undergo differentiation, in morphogenesis control. The sequence is that of GTPase Obg from Crocosphaera subtropica (strain ATCC 51142 / BH68) (Cyanothece sp. (strain ATCC 51142)).